The primary structure comprises 58 residues: Galectin-1 (58 aa).

Positions Gly-2–Val-58 constitute a Galectin domain. A beta-D-galactoside contacts are provided by residues His-43–Arg-47 and His-51.

Monomer. In terms of tissue distribution, detected in most tissues, most abundantly in skin.

Its subcellular location is the secreted. The protein localises to the extracellular space. It localises to the extracellular matrix. In terms of biological role, may regulate cell apoptosis and cell differentiation. Binds beta-galactoside and a wide array of complex carbohydrates. The polypeptide is Galectin-1 (Podarcis hispanicus (Iberian wall lizard)).